Reading from the N-terminus, the 400-residue chain is General L-amino acid transport system permease protein AapQ (400 aa).

8 consecutive transmembrane segments (helical) span residues 29–49, 100–120, 142–162, 188–208, 225–245, 264–284, 340–360, and 367–387; these read SIFY…WVAH, LLVA…IGIG, IPPL…LPQP, TGMI…IIIA, VWTA…VSGF, VVGP…ASFI, NSSL…GTIL, and IEIV…TSLF. The region spanning 96–388 is the ABC transmembrane type-1 domain; it reads ILNTLLVAVT…SLSILTSLFM (293 aa).

Belongs to the binding-protein-dependent transport system permease family. HisMQ subfamily.

The protein resides in the cell inner membrane. Its function is as follows. Part of a binding-protein-dependent transport system for L-amino acids, affects the uptake as well as efflux of these amino acids. Probably responsible for the translocation of the substrate across the membrane. The polypeptide is General L-amino acid transport system permease protein AapQ (aapQ) (Rhizobium johnstonii (strain DSM 114642 / LMG 32736 / 3841) (Rhizobium leguminosarum bv. viciae)).